A 303-amino-acid chain; its full sequence is HTH-type transcriptional regulator CatM (303 aa).

The 58-residue stretch at 1-58 (MELRHLRYFVTVVEEQSISKAAEKLCIAQPPLSRQIQKLEEELGIQLFERGFRPAKVT) folds into the HTH lysR-type domain. A DNA-binding region (H-T-H motif) is located at residues 18-37 (ISKAAEKLCIAQPPLSRQIQ). Positions 99 and 128 each coordinate cis,cis-muconate.

The protein belongs to the LysR transcriptional regulatory family. In terms of assembly, homotetramer in solution.

Positively regulates the expression of catA, catBCIJFD and benPK in response to cis,cis-muconate. It binds to the catB-catM intercistronic region, to a specific sequence upstream of catA and to the benPK promoter region. Can also repress pca genes. This Acinetobacter baylyi (strain ATCC 33305 / BD413 / ADP1) protein is HTH-type transcriptional regulator CatM (catM).